The primary structure comprises 328 residues: Extracellular exo-alpha-(1-&gt;5)-L-arabinofuranosidase (328 aa).

Positions 1-43 (MCTREAVRMSREHDLPEIPSRRLLLKGAAAAGALTAVPGVAHA) form a signal peptide, tat-tyPE signal. The Proton acceptor role is filled by Asp-60. The active-site Proton donor is the Glu-236.

The protein belongs to the glycosyl hydrolase 43 family. In terms of processing, predicted to be exported by the Tat system. The position of the signal peptide cleavage has been experimentally proven.

It is found in the secreted. The catalysed reaction is Hydrolysis of terminal non-reducing alpha-L-arabinofuranoside residues in alpha-L-arabinosides.. Its pathway is glycan metabolism; L-arabinan degradation. Its function is as follows. Involved in the degradation of arabinan and is a key enzyme in the complete degradation of the plant cell wall. Catalyzes only the cleavage of terminal alpha-(1-&gt;5) arabinofuranosyl bonds of arabinan present in the arabinofuranosyl polysaccharides or oligosaccharides. It cannot act on other arabinose-containing polysaccharides and arabinoxylo-oligosaccharides. This is Extracellular exo-alpha-(1-&gt;5)-L-arabinofuranosidase from Streptomyces chartreusis.